Consider the following 217-residue polypeptide: 3,4-dihydroxy-2-butanone 4-phosphate synthase (217 aa).

D-ribulose 5-phosphate-binding positions include 37–38 (RE), Asp42, 150–154 (RGGHT), and Glu174. Glu38 serves as a coordination point for Mg(2+). His153 is a binding site for Mg(2+).

The protein belongs to the DHBP synthase family. As to quaternary structure, homodimer. It depends on Mg(2+) as a cofactor. Mn(2+) is required as a cofactor.

It catalyses the reaction D-ribulose 5-phosphate = (2S)-2-hydroxy-3-oxobutyl phosphate + formate + H(+). Its pathway is cofactor biosynthesis; riboflavin biosynthesis; 2-hydroxy-3-oxobutyl phosphate from D-ribulose 5-phosphate: step 1/1. Catalyzes the conversion of D-ribulose 5-phosphate to formate and 3,4-dihydroxy-2-butanone 4-phosphate. The sequence is that of 3,4-dihydroxy-2-butanone 4-phosphate synthase from Citrobacter koseri (strain ATCC BAA-895 / CDC 4225-83 / SGSC4696).